The sequence spans 436 residues: C4-dicarboxylate transport protein 2 (436 aa).

9 helical membrane passes run 14–34, 45–65, 77–97, 142–162, 198–218, 223–243, 290–310, 331–351, and 353–373; these read VLVA…TAVA, LIKM…IAGM, MALL…LVVV, VVGA…VLFG, PIGA…GSLV, LMLC…GGIA, VVGL…SIYL, ITLL…TGSG, and IVLA…LALI. Positions 414-436 are disordered; it reads ELAGEGNASSPASDIPVGGREAV.

This sequence belongs to the dicarboxylate/amino acid:cation symporter (DAACS) (TC 2.A.23) family.

Its subcellular location is the cell inner membrane. In terms of biological role, responsible for the transport of dicarboxylates such as succinate, fumarate, and malate from the periplasm across the membrane. In Pseudomonas paraeruginosa (strain DSM 24068 / PA7) (Pseudomonas aeruginosa (strain PA7)), this protein is C4-dicarboxylate transport protein 2.